A 267-amino-acid polypeptide reads, in one-letter code: Cilia- and flagella-associated protein 300 (267 aa).

The protein belongs to the CFAP300 family. Interacts with DNAAF2.

The protein resides in the cytoplasm. The protein localises to the cytoskeleton. Its subcellular location is the cilium axoneme. Its function is as follows. Cilium- and flagellum-specific protein that plays a role in axonemal structure organization and motility. May play a role in outer and inner dynein arm assembly. The polypeptide is Cilia- and flagella-associated protein 300 (Bos taurus (Bovine)).